The chain runs to 513 residues: ATP synthase subunit alpha (513 aa).

An ATP-binding site is contributed by G169–S176.

The protein belongs to the ATPase alpha/beta chains family. As to quaternary structure, F-type ATPases have 2 components, CF(1) - the catalytic core - and CF(0) - the membrane proton channel. CF(1) has five subunits: alpha(3), beta(3), gamma(1), delta(1), epsilon(1). CF(0) has three main subunits: a(1), b(2) and c(9-12). The alpha and beta chains form an alternating ring which encloses part of the gamma chain. CF(1) is attached to CF(0) by a central stalk formed by the gamma and epsilon chains, while a peripheral stalk is formed by the delta and b chains.

It localises to the cell inner membrane. It catalyses the reaction ATP + H2O + 4 H(+)(in) = ADP + phosphate + 5 H(+)(out). Produces ATP from ADP in the presence of a proton gradient across the membrane. The alpha chain is a regulatory subunit. In Blochmanniella floridana, this protein is ATP synthase subunit alpha.